A 602-amino-acid chain; its full sequence is Elongation factor 4 (602 aa).

Positions Lys7 to Glu189 constitute a tr-type G domain. GTP contacts are provided by residues Asp19–Thr24 and Asn136–Asp139.

It belongs to the TRAFAC class translation factor GTPase superfamily. Classic translation factor GTPase family. LepA subfamily.

It localises to the cell membrane. The enzyme catalyses GTP + H2O = GDP + phosphate + H(+). In terms of biological role, required for accurate and efficient protein synthesis under certain stress conditions. May act as a fidelity factor of the translation reaction, by catalyzing a one-codon backward translocation of tRNAs on improperly translocated ribosomes. Back-translocation proceeds from a post-translocation (POST) complex to a pre-translocation (PRE) complex, thus giving elongation factor G a second chance to translocate the tRNAs correctly. Binds to ribosomes in a GTP-dependent manner. This is Elongation factor 4 from Ruminiclostridium cellulolyticum (strain ATCC 35319 / DSM 5812 / JCM 6584 / H10) (Clostridium cellulolyticum).